The chain runs to 616 residues: Proline--tRNA ligase (616 aa).

The protein belongs to the class-II aminoacyl-tRNA synthetase family. ProS type 1 subfamily. Homodimer.

The protein localises to the cytoplasm. It carries out the reaction tRNA(Pro) + L-proline + ATP = L-prolyl-tRNA(Pro) + AMP + diphosphate. In terms of biological role, catalyzes the attachment of proline to tRNA(Pro) in a two-step reaction: proline is first activated by ATP to form Pro-AMP and then transferred to the acceptor end of tRNA(Pro). As ProRS can inadvertently accommodate and process non-cognate amino acids such as alanine and cysteine, to avoid such errors it has two additional distinct editing activities against alanine. One activity is designated as 'pretransfer' editing and involves the tRNA(Pro)-independent hydrolysis of activated Ala-AMP. The other activity is designated 'posttransfer' editing and involves deacylation of mischarged Ala-tRNA(Pro). The misacylated Cys-tRNA(Pro) is not edited by ProRS. The polypeptide is Proline--tRNA ligase (Lactococcus lactis subsp. lactis (strain IL1403) (Streptococcus lactis)).